The primary structure comprises 160 residues: Nucleotide-binding protein VFMJ11_1323 (160 aa).

Belongs to the YajQ family.

Its function is as follows. Nucleotide-binding protein. In Aliivibrio fischeri (strain MJ11) (Vibrio fischeri), this protein is Nucleotide-binding protein VFMJ11_1323.